Reading from the N-terminus, the 367-residue chain is Polygalacturonase (367 aa).

Residues 1 to 19 form the signal peptide; that stretch reads MSIRLIAVLSAASIAVTSA. An intrachain disulfide couples cysteine 27 to cysteine 42. N-linked (GlcNAc...) asparagine glycosylation occurs at asparagine 185. The stretch at 187-208 is one PbH1 1 repeat; that stretch reads TDQLTIEDTVVKNQDDCIAVNQ. The active-site Proton donor is aspartate 201. A disulfide bond links cysteine 203 and cysteine 219. Histidine 223 is a catalytic residue. The PbH1 2 repeat unit spans residues 240–261; that stretch reads VRNVTFSNSVVRKSRNGIHIKT. N-linked (GlcNAc...) asparagine glycosylation is present at asparagine 242. Cysteines 334 and 339 form a disulfide. Residues asparagine 343 and asparagine 357 are each glycosylated (N-linked (GlcNAc...) asparagine). An intrachain disulfide couples cysteine 358 to cysteine 367.

The protein belongs to the glycosyl hydrolase 28 family. Expressed in larval carcasses and gut, and adult gut.

The protein localises to the secreted. Its subcellular location is the cell wall. The catalysed reaction is (1,4-alpha-D-galacturonosyl)n+m + H2O = (1,4-alpha-D-galacturonosyl)n + (1,4-alpha-D-galacturonosyl)m.. This Phaedon cochleariae (Mustard beetle) protein is Polygalacturonase.